Reading from the N-terminus, the 318-residue chain is Methionyl-tRNA formyltransferase (318 aa).

112 to 115 (SILP) lines the (6S)-5,6,7,8-tetrahydrofolate pocket.

Belongs to the Fmt family.

The enzyme catalyses L-methionyl-tRNA(fMet) + (6R)-10-formyltetrahydrofolate = N-formyl-L-methionyl-tRNA(fMet) + (6S)-5,6,7,8-tetrahydrofolate + H(+). Functionally, attaches a formyl group to the free amino group of methionyl-tRNA(fMet). The formyl group appears to play a dual role in the initiator identity of N-formylmethionyl-tRNA by promoting its recognition by IF2 and preventing the misappropriation of this tRNA by the elongation apparatus. This Shewanella baltica (strain OS195) protein is Methionyl-tRNA formyltransferase.